The sequence spans 293 residues: Energy-coupling factor transporter ATP-binding protein EcfA2 (293 aa).

One can recognise an ABC transporter domain in the interval 3-246 (ITFQKVEHRY…ADELEKIGVD (244 aa)). Residue 40–47 (GHTGSGKS) coordinates ATP.

This sequence belongs to the ABC transporter superfamily. Energy-coupling factor EcfA family. Forms a stable energy-coupling factor (ECF) transporter complex composed of 2 membrane-embedded substrate-binding proteins (S component), 2 ATP-binding proteins (A component) and 2 transmembrane proteins (T component).

Its subcellular location is the cell membrane. ATP-binding (A) component of a common energy-coupling factor (ECF) ABC-transporter complex. Unlike classic ABC transporters this ECF transporter provides the energy necessary to transport a number of different substrates. This is Energy-coupling factor transporter ATP-binding protein EcfA2 from Bacillus cereus (strain ZK / E33L).